A 564-amino-acid chain; its full sequence is Alpha-amylase 3 (564 aa).

The N-terminal stretch at 1–21 (MFGVYFVLLFLSSALIHVANA) is a signal peptide. An intrachain disulfide couples cysteine 51 to cysteine 59. Substrate-binding residues include asparagine 56 and tryptophan 105. Asparagine 143 is a binding site for Ca(2+). A disulfide bridge links cysteine 172 with cysteine 188. Asparagine 181 is a glycosylation site (N-linked (GlcNAc...) asparagine). Aspartate 198 is a Ca(2+) binding site. Arginine 227 serves as a coordination point for substrate. Aspartate 229 is a binding site for Ca(2+). The active-site Nucleophile is the aspartate 229. 232-233 (KM) contributes to the substrate binding site. A glycan (N-linked (GlcNAc...) asparagine) is linked at asparagine 235. Glutamate 253 contributes to the Ca(2+) binding site. Residue glutamate 253 is the Proton donor of the active site. A disulfide bond links cysteine 263 and cysteine 306. N-linked (GlcNAc...) asparagine glycosylation is found at asparagine 282 and asparagine 305. 2 residues coordinate substrate: aspartate 322 and arginine 369. Residues asparagine 438, asparagine 447, and asparagine 498 are each glycosylated (N-linked (GlcNAc...) asparagine). A lipid anchor (GPI-anchor amidated serine) is attached at serine 538. A propeptide spans 539–564 (SSRLILSFKTLVFGLGVTAMLFVLFF) (removed in mature form).

Belongs to the glycosyl hydrolase 13 family. The cofactor is Ca(2+). N-glycosylated.

The protein resides in the cell membrane. It catalyses the reaction Endohydrolysis of (1-&gt;4)-alpha-D-glucosidic linkages in polysaccharides containing three or more (1-&gt;4)-alpha-linked D-glucose units.. Functionally, has a role in cell wall biosynthesis where it is involved in maintaining cell wall strength and shape. The protein is Alpha-amylase 3 (aah3) of Schizosaccharomyces pombe (strain 972 / ATCC 24843) (Fission yeast).